The chain runs to 154 residues: Putative pre-16S rRNA nuclease (154 aa).

It belongs to the YqgF nuclease family.

It localises to the cytoplasm. Its function is as follows. Could be a nuclease involved in processing of the 5'-end of pre-16S rRNA. The chain is Putative pre-16S rRNA nuclease from Rickettsia africae (strain ESF-5).